The chain runs to 288 residues: Diaminopimelate epimerase (288 aa).

3 residues coordinate substrate: asparagine 17, glutamine 47, and asparagine 67. Cysteine 76 (proton donor) is an active-site residue. Residues 77–78 (GN), asparagine 163, asparagine 196, and 214–215 (ER) contribute to the substrate site. Cysteine 223 acts as the Proton acceptor in catalysis. 224-225 (GS) serves as a coordination point for substrate.

The protein belongs to the diaminopimelate epimerase family. Homodimer.

The protein localises to the cytoplasm. It carries out the reaction (2S,6S)-2,6-diaminopimelate = meso-2,6-diaminopimelate. The protein operates within amino-acid biosynthesis; L-lysine biosynthesis via DAP pathway; DL-2,6-diaminopimelate from LL-2,6-diaminopimelate: step 1/1. Its function is as follows. Catalyzes the stereoinversion of LL-2,6-diaminopimelate (L,L-DAP) to meso-diaminopimelate (meso-DAP), a precursor of L-lysine and an essential component of the bacterial peptidoglycan. This Rhodopseudomonas palustris (strain BisB18) protein is Diaminopimelate epimerase.